A 286-amino-acid polypeptide reads, in one-letter code: 4-hydroxybenzoate octaprenyltransferase (286 aa).

7 helical membrane passes run 21–40 (GTLLLLWPCLMALMLAAGGM), 95–115 (ILFVILGLSAFGLVLLLNGLV), 142–162 (FLGIVWSWSIPMAYAAQTGEV), 167–187 (WWLFAANWCWTVAYDTMYAMV), 210–230 (QIIGLFQLAALACFIAAGWSA), 235–255 (LYGLGILTFVGFSTYQQMLIF), and 266–286 (FLNNNWAGLALFVGLGADYLI).

This sequence belongs to the UbiA prenyltransferase family. It depends on Mg(2+) as a cofactor.

Its subcellular location is the cell inner membrane. It catalyses the reaction all-trans-octaprenyl diphosphate + 4-hydroxybenzoate = 4-hydroxy-3-(all-trans-octaprenyl)benzoate + diphosphate. It functions in the pathway cofactor biosynthesis; ubiquinone biosynthesis. In terms of biological role, catalyzes the prenylation of para-hydroxybenzoate (PHB) with an all-trans polyprenyl group. Mediates the second step in the final reaction sequence of ubiquinone-8 (UQ-8) biosynthesis, which is the condensation of the polyisoprenoid side chain with PHB, generating the first membrane-bound Q intermediate 3-octaprenyl-4-hydroxybenzoate. The sequence is that of 4-hydroxybenzoate octaprenyltransferase from Shewanella baltica (strain OS185).